A 179-amino-acid chain; its full sequence is Ribosome maturation factor RimM (179 aa).

In terms of domain architecture, PRC barrel spans 95-174 (KDEFFYFDIL…QIFCTQDAFL (80 aa)).

This sequence belongs to the RimM family. Binds ribosomal protein uS19.

It is found in the cytoplasm. In terms of biological role, an accessory protein needed during the final step in the assembly of 30S ribosomal subunit, possibly for assembly of the head region. Essential for efficient processing of 16S rRNA. May be needed both before and after RbfA during the maturation of 16S rRNA. It has affinity for free ribosomal 30S subunits but not for 70S ribosomes. The protein is Ribosome maturation factor RimM of Campylobacter jejuni subsp. doylei (strain ATCC BAA-1458 / RM4099 / 269.97).